Consider the following 181-residue polypeptide: Adenine phosphoribosyltransferase (181 aa).

The protein belongs to the purine/pyrimidine phosphoribosyltransferase family. As to quaternary structure, homodimer.

The protein resides in the cytoplasm. The catalysed reaction is AMP + diphosphate = 5-phospho-alpha-D-ribose 1-diphosphate + adenine. Its pathway is purine metabolism; AMP biosynthesis via salvage pathway; AMP from adenine: step 1/1. Catalyzes a salvage reaction resulting in the formation of AMP, that is energically less costly than de novo synthesis. The chain is Adenine phosphoribosyltransferase from Brucella suis (strain ATCC 23445 / NCTC 10510).